Reading from the N-terminus, the 378-residue chain is UPF0754 membrane protein Exig_0680 (378 aa).

The next 2 membrane-spanning stretches (helical) occupy residues V5–T25 and I357–I377.

The protein belongs to the UPF0754 family.

The protein resides in the cell membrane. This Exiguobacterium sibiricum (strain DSM 17290 / CCUG 55495 / CIP 109462 / JCM 13490 / 255-15) protein is UPF0754 membrane protein Exig_0680.